The chain runs to 286 residues: S-adenosylmethionine-dependent methyltransferase UmaA (286 aa).

Residues 32–33, 67–75, 93–98, and 122–123 contribute to the S-adenosyl-L-methionine site; these read YT, LLDIGCGWG, TLSRNQ, and WD. The active site involves Cys268.

Belongs to the CFA/CMAS family.

Its subcellular location is the cytoplasm. Functionally, methyltransferase that modifies short-chain fatty acids. In vitro, catalyzes the transfer of the methyl group from S-adenosyl-L-methionine (SAM) to the double bond of phospholipid-linked oleic acid to produce tuberculostearic acid (10-methylstearic-acid or TSA). The protein is S-adenosylmethionine-dependent methyltransferase UmaA of Mycobacterium tuberculosis (strain ATCC 25618 / H37Rv).